Reading from the N-terminus, the 299-residue chain is MPETKYPRLVIVTGLSGAGKTQAVRCLEDLGFFCVDNLPPSLIPGLVDLLGHPGKEGEGITKVALVMDIRGGEFFSGLDAALNYLDGLGIPYEILFLEAADEVLVRRYKETRRRHPLSSGGQILEGIIEERRRLEELRGRASKIIDTSELTPRQLKEQVSELFGSSQRRLIVSIISFGYKYGIPLDADLVMDVRFLPNPYYVPALRPFTGHDRCVEEFVMASPVTRQFIEQFAALLRFLIPHYLQEGKSHLVVAIGCTGGQHRSVTLANKLGELLQGENYSVTVKHRDVVRYLSTGNRR.

Gly-14 to Thr-21 is a binding site for ATP. Asp-68–Gly-71 serves as a coordination point for GTP.

The protein belongs to the RapZ-like family.

Displays ATPase and GTPase activities. In Moorella thermoacetica (strain ATCC 39073 / JCM 9320), this protein is Nucleotide-binding protein Moth_0258.